The following is a 268-amino-acid chain: NH(3)-dependent NAD(+) synthetase (268 aa).

Residue 46–53 (GISGGQDS) participates in ATP binding. A Mg(2+)-binding site is contributed by Asp-52. Arg-140 lines the deamido-NAD(+) pocket. Thr-160 provides a ligand contact to ATP. Position 165 (Glu-165) interacts with Mg(2+). Lys-173 and Asp-180 together coordinate deamido-NAD(+). Residues Lys-189 and Thr-211 each contribute to the ATP site. 260-261 (HK) serves as a coordination point for deamido-NAD(+).

Belongs to the NAD synthetase family. In terms of assembly, homodimer.

The catalysed reaction is deamido-NAD(+) + NH4(+) + ATP = AMP + diphosphate + NAD(+) + H(+). The protein operates within cofactor biosynthesis; NAD(+) biosynthesis; NAD(+) from deamido-NAD(+) (ammonia route): step 1/1. Functionally, catalyzes the ATP-dependent amidation of deamido-NAD to form NAD. Uses ammonia as a nitrogen source. The polypeptide is NH(3)-dependent NAD(+) synthetase (Buchnera aphidicola subsp. Schizaphis graminum (strain Sg)).